The following is a 489-amino-acid chain: 3-octaprenyl-4-hydroxybenzoate carboxy-lyase (489 aa).

Asparagine 172 is a binding site for Mn(2+). Prenylated FMN-binding positions include 175-177 (IYR), 189-191 (RWL), and 194-195 (RG). Mn(2+) is bound at residue glutamate 238. Aspartate 287 serves as the catalytic Proton donor.

It belongs to the UbiD family. As to quaternary structure, homohexamer. Requires prenylated FMN as cofactor. It depends on Mn(2+) as a cofactor.

The protein localises to the cell membrane. It carries out the reaction a 4-hydroxy-3-(all-trans-polyprenyl)benzoate + H(+) = a 2-(all-trans-polyprenyl)phenol + CO2. It participates in cofactor biosynthesis; ubiquinone biosynthesis. In terms of biological role, catalyzes the decarboxylation of 3-octaprenyl-4-hydroxy benzoate to 2-octaprenylphenol, an intermediate step in ubiquinone biosynthesis. The chain is 3-octaprenyl-4-hydroxybenzoate carboxy-lyase from Glaesserella parasuis serovar 5 (strain SH0165) (Haemophilus parasuis).